Consider the following 650-residue polypeptide: Acetyl-coenzyme A synthetase (650 aa).

CoA is bound by residues 189-192 (RGGK), threonine 307, and asparagine 331. ATP contacts are provided by residues 383–385 (GEP), 407–412 (DTWWQT), aspartate 496, and arginine 511. Position 519 (serine 519) interacts with CoA. Arginine 522 is a binding site for ATP. Mg(2+) contacts are provided by valine 533, histidine 535, and valine 538. Residue arginine 580 participates in CoA binding. Lysine 605 is modified (N6-acetyllysine).

The protein belongs to the ATP-dependent AMP-binding enzyme family. It depends on Mg(2+) as a cofactor. Acetylated. Deacetylation by the SIR2-homolog deacetylase activates the enzyme.

The enzyme catalyses acetate + ATP + CoA = acetyl-CoA + AMP + diphosphate. Functionally, catalyzes the conversion of acetate into acetyl-CoA (AcCoA), an essential intermediate at the junction of anabolic and catabolic pathways. AcsA undergoes a two-step reaction. In the first half reaction, AcsA combines acetate with ATP to form acetyl-adenylate (AcAMP) intermediate. In the second half reaction, it can then transfer the acetyl group from AcAMP to the sulfhydryl group of CoA, forming the product AcCoA. The sequence is that of Acetyl-coenzyme A synthetase from Syntrophobacter fumaroxidans (strain DSM 10017 / MPOB).